The following is a 201-amino-acid chain: Small ribosomal subunit protein uS4c (201 aa).

The S4 RNA-binding domain maps to 89–152; that stretch reads MRLDNILFRL…NSRTLVQNLL (64 aa).

It belongs to the universal ribosomal protein uS4 family. Part of the 30S ribosomal subunit. Contacts protein S5. The interaction surface between S4 and S5 is involved in control of translational fidelity.

Its subcellular location is the plastid. The protein localises to the chloroplast. Functionally, one of the primary rRNA binding proteins, it binds directly to 16S rRNA where it nucleates assembly of the body of the 30S subunit. Its function is as follows. With S5 and S12 plays an important role in translational accuracy. The chain is Small ribosomal subunit protein uS4c (rps4) from Olimarabidopsis pumila (Dwarf rocket).